Here is a 205-residue protein sequence, read N- to C-terminus: MSSTPRPHDLVWLNHASALEAIAEPWVAQQWRAALPVVVRRDVDDQARIPVGVRGMKREQRAAGWVQAHNIVRCVTPEMLVERERLLGSPFVSQPPVQAAIALTLHPWSWRWGVTGSTGYALATEIPVLHAASDLDLLIRAPQPLDREALREWLARVAQLPCRADTQVETPYGAFALNEWLRDGRALLKTSHGARLTATPWHREE.

Residues Asp134 and Asp136 contribute to the active site.

It belongs to the MdcG family.

The enzyme catalyses apo-[malonate decarboxylase ACP] + 2'-(5''-triphospho-alpha-D-ribosyl)-3'-dephospho-CoA = holo-[malonate decarboxylase ACP] + diphosphate. Its function is as follows. Transfers 2'-(5-triphosphoribosyl)-3'-dephosphocoenzyme-A to the apo-[acyl-carrier-protein] of the malonate decarboxylase to yield holo-[acyl-carrier-protein]. The polypeptide is Phosphoribosyl-dephospho-CoA transferase (Klebsiella pneumoniae (strain 342)).